We begin with the raw amino-acid sequence, 635 residues long: Biosynthetic arginine decarboxylase (635 aa).

Residue lysine 103 is modified to N6-(pyridoxal phosphate)lysine. Substrate is bound at residue phenylalanine 283–tyrosine 293.

It belongs to the Orn/Lys/Arg decarboxylase class-II family. SpeA subfamily. Requires Mg(2+) as cofactor. It depends on pyridoxal 5'-phosphate as a cofactor.

The catalysed reaction is L-arginine + H(+) = agmatine + CO2. It functions in the pathway amine and polyamine biosynthesis; agmatine biosynthesis; agmatine from L-arginine: step 1/1. Catalyzes the biosynthesis of agmatine from arginine. This chain is Biosynthetic arginine decarboxylase, found in Proteus mirabilis (strain HI4320).